The chain runs to 135 residues: MFEEVEVEAYVYPTEDIEKVKRAMLNLIPDLEFEAFDRGDYIILTGKTRSKKALQRLYELFRGQAILDTARSFLEEGYFGEEIIIKVNKQAAYAGVVNFNEESPLGPITIIIRTKDPQRLMKWLAPRTKDGVPIE.

This sequence belongs to the UPF0201 family.

This Thermococcus onnurineus (strain NA1) protein is UPF0201 protein TON_1346.